We begin with the raw amino-acid sequence, 501 residues long: Glutamate--tRNA ligase (501 aa).

Positions 21 to 31 (PSPTGTPHVGL) match the 'HIGH' region motif. The short motif at 266-270 (KLSKR) is the 'KMSKS' region element. Lysine 269 serves as a coordination point for ATP.

This sequence belongs to the class-I aminoacyl-tRNA synthetase family. Glutamate--tRNA ligase type 1 subfamily. In terms of assembly, monomer.

The protein resides in the cytoplasm. It catalyses the reaction tRNA(Glu) + L-glutamate + ATP = L-glutamyl-tRNA(Glu) + AMP + diphosphate. Functionally, catalyzes the attachment of glutamate to tRNA(Glu) in a two-step reaction: glutamate is first activated by ATP to form Glu-AMP and then transferred to the acceptor end of tRNA(Glu). The polypeptide is Glutamate--tRNA ligase (Kineococcus radiotolerans (strain ATCC BAA-149 / DSM 14245 / SRS30216)).